A 159-amino-acid chain; its full sequence is 2-C-methyl-D-erythritol 2,4-cyclodiphosphate synthase (159 aa).

2 residues coordinate a divalent metal cation: aspartate 10 and histidine 12. Residues 10-12 and 36-37 each bind 4-CDP-2-C-methyl-D-erythritol 2-phosphate; these read DVH and HS. Residue histidine 44 participates in a divalent metal cation binding. Residues 58 to 60, 134 to 137, phenylalanine 141, and arginine 144 contribute to the 4-CDP-2-C-methyl-D-erythritol 2-phosphate site; these read DIG and TTSE.

It belongs to the IspF family. Homotrimer. A divalent metal cation is required as a cofactor.

It catalyses the reaction 4-CDP-2-C-methyl-D-erythritol 2-phosphate = 2-C-methyl-D-erythritol 2,4-cyclic diphosphate + CMP. Its pathway is isoprenoid biosynthesis; isopentenyl diphosphate biosynthesis via DXP pathway; isopentenyl diphosphate from 1-deoxy-D-xylulose 5-phosphate: step 4/6. Functionally, involved in the biosynthesis of isopentenyl diphosphate (IPP) and dimethylallyl diphosphate (DMAPP), two major building blocks of isoprenoid compounds. Catalyzes the conversion of 4-diphosphocytidyl-2-C-methyl-D-erythritol 2-phosphate (CDP-ME2P) to 2-C-methyl-D-erythritol 2,4-cyclodiphosphate (ME-CPP) with a corresponding release of cytidine 5-monophosphate (CMP). The chain is 2-C-methyl-D-erythritol 2,4-cyclodiphosphate synthase from Roseobacter denitrificans (strain ATCC 33942 / OCh 114) (Erythrobacter sp. (strain OCh 114)).